The sequence spans 237 residues: UPF0053 inner membrane protein YgdQ (237 aa).

Over 1 to 17 (MLFAWITDPNAWLALGT) the chain is Periplasmic. A helical membrane pass occupies residues 18-38 (LTLLEIVLGIDNIIFLSLVVA). Over 39-50 (KLPTAQRAHARR) the chain is Cytoplasmic. The helical transmembrane segment at 51-71 (LGLAGAMVMRLALLASIAWVT) threads the bilayer. Residues 72–79 (RLTNPLFT) are Periplasmic-facing. A helical membrane pass occupies residues 80–100 (IFSQEISARDLILLLGGLFLI). The Cytoplasmic portion of the chain corresponds to 101–124 (WKASKEIHESIEGEEEGLKTRVSS). Residues 125-145 (FLGAIVQIMLLDIIFSLDSVI) form a helical membrane-spanning segment. Residues 146–151 (TAVGLS) are Periplasmic-facing. A helical transmembrane segment spans residues 152 to 172 (DHLFIMMAAVVIAVGVMMFAA). The Cytoplasmic portion of the chain corresponds to 173 to 186 (RSIGDFVERHPSVK). Residues 187 to 207 (MLALSFLILVGFTLILESFDI) form a helical membrane-spanning segment. Residues 208-209 (HV) lie on the Periplasmic side of the membrane. Residues 210–230 (PKGYIYFAMFFSIAVESLNLI) form a helical membrane-spanning segment. Over 231-237 (RNKKNPL) the chain is Cytoplasmic.

This sequence belongs to the UPF0053 family.

Its subcellular location is the cell inner membrane. The polypeptide is UPF0053 inner membrane protein YgdQ (ygdQ) (Escherichia coli O157:H7).